Consider the following 186-residue polypeptide: Elongation factor P (186 aa).

It belongs to the elongation factor P family.

It localises to the cytoplasm. Its pathway is protein biosynthesis; polypeptide chain elongation. Involved in peptide bond synthesis. Stimulates efficient translation and peptide-bond synthesis on native or reconstituted 70S ribosomes in vitro. Probably functions indirectly by altering the affinity of the ribosome for aminoacyl-tRNA, thus increasing their reactivity as acceptors for peptidyl transferase. This chain is Elongation factor P, found in Brucella canis (strain ATCC 23365 / NCTC 10854 / RM-666).